The chain runs to 320 residues: Cytochrome c biogenesis protein CcsA (320 aa).

Helical transmembrane passes span 9-29 (ILIHISFSVVSIVITIYFLTL), 44-64 (GMIVTFFCITGLLAARWIYSG), 71-91 (LYESLIFLSWSFSIIHMVCYF), 99-119 (LNAITGPSAILTQGFATSGLL), 144-164 (MVLGYAALLCGSLLSVALLVI), 226-246 (IISLGFIFLTIGILSGAVWAN), 261-281 (WAFITWTIFAIYLHIRTNINL), and 287-307 (AIVASMGFLIIWICYFGVNLL).

This sequence belongs to the CcmF/CycK/Ccl1/NrfE/CcsA family. In terms of assembly, may interact with Ccs1.

It is found in the plastid. The protein resides in the chloroplast thylakoid membrane. In terms of biological role, required during biogenesis of c-type cytochromes (cytochrome c6 and cytochrome f) at the step of heme attachment. The sequence is that of Cytochrome c biogenesis protein CcsA from Carica papaya (Papaya).